A 450-amino-acid chain; its full sequence is Plasminogen-binding protein PgbA (450 aa).

3 stretches are compositionally biased toward basic and acidic residues: residues 262 to 273, 284 to 310, and 317 to 362; these read EIKQEAIKEPKK, LEEKNYQKAERKFDAKEERRRSRDERK, and KAME…REIN. The interval 262-450 is disordered; that stretch reads EIKQEAIKEP…RRKALEMNKK (189 aa). Positions 363–386 are enriched in polar residues; sequence QESANEPSSENNATLKDTENTSVL. Residues 389 to 450 are compositionally biased toward basic and acidic residues; sequence SAAKKEAPKP…RRKALEMNKK (62 aa).

The protein resides in the cell surface. In terms of biological role, binds plasminogen, specifically, and in a concentration and lysine-dependent manner. Plasminogen is the precursor of plasmin, a serine protease that cleaves fibrin, fibronectin, laminin and vitronectin. Acquisition of plasminogen/plasmin could enable H.pylori to degrade host components. The chain is Plasminogen-binding protein PgbA (pgbA) from Helicobacter pylori (strain J99 / ATCC 700824) (Campylobacter pylori J99).